Consider the following 54-residue polypeptide: U-reduvitoxin-Pr1a (54 aa).

Positions 1–19 are cleaved as a signal peptide; it reads MKLLGLLLLVFTFMALAFA. 3 disulfides stabilise this stretch: Cys24/Cys39, Cys31/Cys44, and Cys38/Cys51.

The protein belongs to the venom Ptu1-like knottin family. In terms of tissue distribution, expressed by the venom gland (posterior main gland) (at protein level).

The protein resides in the secreted. In terms of biological role, binds reversibly and blocks P/Q-type voltage-gated calcium channels (Cav). The protein is U-reduvitoxin-Pr1a of Platymeris rhadamanthus (Red spot assassin bug).